The primary structure comprises 68 residues: Conotoxin Pu5.5 (68 aa).

The signal sequence occupies residues 1–22 (MRCVPVFIILLVLIASAPSVDA). A propeptide spanning residues 23 to 49 (RPQTKDDALASFRDSIKRHLQTLLDAR) is cleaved from the precursor.

The protein belongs to the conotoxin T superfamily. Contains 2 disulfide bonds that can be either 'C1-C3, C2-C4' or 'C1-C4, C2-C3', since these disulfide connectivities have been observed for conotoxins with cysteine framework V (for examples, see AC P0DQQ7 and AC P81755). In terms of tissue distribution, expressed by the venom duct.

The protein localises to the secreted. The chain is Conotoxin Pu5.5 from Conus pulicarius (Flea-bitten cone).